Reading from the N-terminus, the 114-residue chain is Iron-sulfur cluster insertion protein ErpA (114 aa).

Iron-sulfur cluster is bound by residues Cys42, Cys106, and Cys108.

This sequence belongs to the HesB/IscA family. In terms of assembly, homodimer. It depends on iron-sulfur cluster as a cofactor.

In terms of biological role, required for insertion of 4Fe-4S clusters for at least IspG. The sequence is that of Iron-sulfur cluster insertion protein ErpA from Shigella boydii serotype 18 (strain CDC 3083-94 / BS512).